We begin with the raw amino-acid sequence, 64 residues long: Probable cytochrome c oxidase subunit 5C-3 (64 aa).

A helical membrane pass occupies residues 15–34; it reads SVVKELVIGLTLGLAAGGLW.

Belongs to the cytochrome c oxidase subunit 5C family.

It is found in the mitochondrion inner membrane. This protein is one of the nuclear-coded polypeptide chains of cytochrome c oxidase, the terminal oxidase in mitochondrial electron transport. The sequence is that of Probable cytochrome c oxidase subunit 5C-3 from Arabidopsis thaliana (Mouse-ear cress).